A 55-amino-acid polypeptide reads, in one-letter code: Large ribosomal subunit protein bL32 (55 aa).

Basic residues predominate over residues 1-19 (MAVPKFKKSRANTRARRSQ). The segment at 1 to 22 (MAVPKFKKSRANTRARRSQWKA) is disordered.

It belongs to the bacterial ribosomal protein bL32 family.

This is Large ribosomal subunit protein bL32 from Corynebacterium urealyticum (strain ATCC 43042 / DSM 7109).